Consider the following 189-residue polypeptide: Flavin prenyltransferase UbiX (189 aa).

FMN-binding positions include 11–13, S37, 88–91, and R123; these read GAS and SMRT. A dimethylallyl phosphate-binding site is contributed by Y153.

This sequence belongs to the UbiX/PAD1 family.

It carries out the reaction dimethylallyl phosphate + FMNH2 = prenylated FMNH2 + phosphate. Its function is as follows. Flavin prenyltransferase that catalyzes the synthesis of the prenylated FMN cofactor (prenyl-FMN) for 4-hydroxy-3-polyprenylbenzoic acid decarboxylase UbiD. The prenyltransferase is metal-independent and links a dimethylallyl moiety from dimethylallyl monophosphate (DMAP) to the flavin N5 and C6 atoms of FMN. This Neisseria meningitidis serogroup B (strain ATCC BAA-335 / MC58) protein is Flavin prenyltransferase UbiX.